We begin with the raw amino-acid sequence, 287 residues long: 33 kDa chaperonin (287 aa).

Cystine bridges form between C233–C235 and C266–C269.

It belongs to the HSP33 family. In terms of processing, under oxidizing conditions two disulfide bonds are formed involving the reactive cysteines. Under reducing conditions zinc is bound to the reactive cysteines and the protein is inactive.

It localises to the cytoplasm. Functionally, redox regulated molecular chaperone. Protects both thermally unfolding and oxidatively damaged proteins from irreversible aggregation. Plays an important role in the bacterial defense system toward oxidative stress. This chain is 33 kDa chaperonin, found in Thermodesulfovibrio yellowstonii (strain ATCC 51303 / DSM 11347 / YP87).